A 186-amino-acid chain; its full sequence is Peptidyl-tRNA hydrolase (186 aa).

TRNA is bound at residue Y14. Catalysis depends on H19, which acts as the Proton acceptor. 3 residues coordinate tRNA: Y64, N66, and N112.

The protein belongs to the PTH family. Monomer.

It is found in the cytoplasm. The enzyme catalyses an N-acyl-L-alpha-aminoacyl-tRNA + H2O = an N-acyl-L-amino acid + a tRNA + H(+). Hydrolyzes ribosome-free peptidyl-tRNAs (with 1 or more amino acids incorporated), which drop off the ribosome during protein synthesis, or as a result of ribosome stalling. Functionally, catalyzes the release of premature peptidyl moieties from peptidyl-tRNA molecules trapped in stalled 50S ribosomal subunits, and thus maintains levels of free tRNAs and 50S ribosomes. This Geobacillus thermodenitrificans (strain NG80-2) protein is Peptidyl-tRNA hydrolase.